The following is a 239-amino-acid chain: DNA repair protein RecO (239 aa).

The protein belongs to the RecO family.

Its function is as follows. Involved in DNA repair and RecF pathway recombination. The polypeptide is DNA repair protein RecO (Christiangramia forsetii (strain DSM 17595 / CGMCC 1.15422 / KT0803) (Gramella forsetii)).